A 440-amino-acid chain; its full sequence is Glycerophosphocholine cholinephosphodiesterase ENPP6 (440 aa).

The signal sequence occupies residues 1-22 (MAVKLGTLLLALALGLAQPASA). Asp-32, Ser-71, and Asn-92 together coordinate substrate. The Zn(2+) site is built by Asp-32 and Ser-71. Ser-71 serves as the catalytic Nucleophile. Ser-71 carries the post-translational modification Phosphoserine. Residues Asn-100 and Asn-118 are each glycosylated (N-linked (GlcNAc...) asparagine). Cys-142 and Cys-154 form a disulfide bridge. Asp-193 serves as a coordination point for substrate. Zn(2+)-binding residues include Asp-193, His-197, Asp-240, and His-241. His-241 contacts substrate. Asn-341 is a glycosylation site (N-linked (GlcNAc...) asparagine). Residue His-354 coordinates substrate. A Zn(2+)-binding site is contributed by His-354. Residue Asn-404 is glycosylated (N-linked (GlcNAc...) asparagine). A lipid anchor (GPI-anchor amidated serine) is attached at Ser-419. The propeptide at 420–440 (TAPPVWPSHCALALILLFLLA) is removed in mature form.

It belongs to the nucleotide pyrophosphatase/phosphodiesterase family. Homodimer; disulfide-linked. Homotetramer. Zn(2+) serves as cofactor. Predominantly expressed in kidney and brain. In the kidney, expressed specifically in the proximal tubules and thin descending limbs of Henle (at protein level).

Its subcellular location is the cell membrane. It catalyses the reaction sn-glycerol 3-phosphocholine + H2O = phosphocholine + glycerol + H(+). The catalysed reaction is a 1-acyl-sn-glycero-3-phosphocholine + H2O = a 1-acyl-sn-glycerol + phosphocholine + H(+). The enzyme catalyses a 1-O-alkyl-sn-glycero-3-phosphocholine + H2O = a 1-O-alkyl-sn-glycerol + phosphocholine + H(+). It carries out the reaction 1-dodecanoyl-sn-glycero-3-phosphocholine + H2O = 1-dodecanoyl-sn-glycerol + phosphocholine + H(+). It catalyses the reaction 1-hexadecanoyl-sn-glycero-3-phosphocholine + H2O = 1-hexadecanoyl-sn-glycerol + phosphocholine + H(+). The catalysed reaction is 1-(5Z,8Z,11Z,14Z-eicosatetraenoyl)-sn-glycero-3-phosphocholine + H2O = 1-(5Z,8Z,11Z,14Z-eicosatetraenoyl)-sn-glycerol + phosphocholine + H(+). The enzyme catalyses 1-tetradecanoyl-sn-glycero-3-phosphocholine + H2O = 1-tetradecanoyl-sn-glycerol + phosphocholine + H(+). It carries out the reaction sphing-4-enine-phosphocholine + H2O = sphing-4-enine + phosphocholine + H(+). It catalyses the reaction 1-(9Z-octadecenoyl)-sn-glycero-3-phosphocholine + H2O = 1-(9Z-octadecenoyl)-sn-glycerol + phosphocholine + H(+). The catalysed reaction is 1-(9Z,12Z)-octadecadienoyl-sn-glycero-3-phosphocholine + H2O = 1-(9Z,12Z-octadecadienoyl)-sn-glycerol + phosphocholine + H(+). The enzyme catalyses glycero-2-phosphocholine + H2O = phosphocholine + glycerol + H(+). Inhibited by EDTA and EGTA in vitro. Functionally, choline-specific glycerophosphodiesterase that hydrolyzes glycerophosphocholine (GPC) and lysophosphatidylcholine (LPC) and contributes to supplying choline to the cells. Has a preference for LPC with short (12:0 and 14:0) or polyunsaturated (18:2 and 20:4) fatty acids. In vitro, hydrolyzes only choline-containing lysophospholipids, such as sphingosylphosphorylcholine (SPC), platelet-activating factor (PAF) and lysoPAF, but not other lysophospholipids. The chain is Glycerophosphocholine cholinephosphodiesterase ENPP6 from Homo sapiens (Human).